The following is a 275-amino-acid chain: 3-oxo-isoapionate decarboxylase (275 aa).

The catalysed reaction is 3-oxoisoapionate + H(+) = L-erythrulose + CO2. The protein operates within carbohydrate metabolism. Its function is as follows. Involved in catabolism of D-apiose. Catalyzes decarboxylation of 3-oxo-isoapionate to L-erythrulose. This chain is 3-oxo-isoapionate decarboxylase, found in Pectobacterium atrosepticum (strain SCRI 1043 / ATCC BAA-672) (Erwinia carotovora subsp. atroseptica).